Consider the following 494-residue polypeptide: Gabija protein GajB (494 aa).

Residues 1-229 (MSREQIIKDG…YHLTSNFRCC (229 aa)) enclose the UvrD-like helicase ATP-binding domain. An ATP-binding site is contributed by 17 to 24 (AGAGSGKT).

It belongs to the helicase family. In terms of assembly, homodimer. Interacts with GajA; 2 GajB dimers dock at opposite sides of the GajA complex to form a 4:4 GajA-GajB assembly (GajAB). GajAB interacts with Bacillus phage Phi3T Gad1 protein; this interaction forms a 4:4:8 GajAB-Gad1 complex and leads to GajAB inhibition.

Functionally, component of antiviral defense system Gabija type I, composed of GajA and GajB. Expression of Gabija type I in B.subtilis (strain BEST7003) confers resistance to phages phi105, phi29, rho14, SpBeta and SBSphiC. Expression of Gabija type I in E.coli B (strain ATCC 11303) confers resistance to phage T7. May be a helicase or contribute to GajA activation. The chain is Gabija protein GajB from Bacillus cereus (strain VD045).